The chain runs to 338 residues: Pseudouridylate synthase TRUB1 (338 aa).

Alanine 2 carries the N-acetylalanine modification. Aspartate 109 functions as the Nucleophile in the catalytic mechanism.

It belongs to the pseudouridine synthase TruB family.

The protein localises to the nucleus. It is found in the cytoplasm. It localises to the cytosol. It carries out the reaction a uridine in mRNA = a pseudouridine in mRNA. It catalyses the reaction a uridine in tRNA = a pseudouridine in tRNA. The enzyme catalyses uridine(55) in tRNA = pseudouridine(55) in tRNA. In terms of biological role, pseudouridine synthase that catalyzes pseudouridylation of mRNAs and tRNAs. Mediates pseudouridylation of mRNAs with the consensus sequence 5'-GUUCNANNC-3', harboring a stem-loop structure. Constitutes the major pseudouridine synthase acting on mRNAs. Also catalyzes pseudouridylation of some tRNAs, including synthesis of pseudouridine(55) from uracil-55, in the psi GC loop of a subset of tRNAs. Promotes the processing of pri-let-7 microRNAs (pri-miRNAs) independently of its RNA pseudouridylate synthase activity. Acts by binding to the stem-loop structure on pri-let-7, preventing LIN28-binding (LIN28A and/or LIN28B), thereby enhancing the interaction between pri-let-7 and the microprocessor DGCR8, which mediates miRNA maturation. The polypeptide is Pseudouridylate synthase TRUB1 (Mus musculus (Mouse)).